We begin with the raw amino-acid sequence, 165 residues long: Chorismate pyruvate-lyase (165 aa).

Positions 35, 77, 115, and 156 each coordinate substrate.

The protein belongs to the UbiC family. In terms of assembly, monomer.

The protein resides in the cytoplasm. The catalysed reaction is chorismate = 4-hydroxybenzoate + pyruvate. The protein operates within cofactor biosynthesis; ubiquinone biosynthesis. In terms of biological role, removes the pyruvyl group from chorismate, with concomitant aromatization of the ring, to provide 4-hydroxybenzoate (4HB) for the ubiquinone pathway. This chain is Chorismate pyruvate-lyase, found in Shigella boydii serotype 18 (strain CDC 3083-94 / BS512).